We begin with the raw amino-acid sequence, 122 residues long: MGQSVSAIRRVSRLRRHARLRKRIAGTQQRPRLVVHRSARHIHVQLVNDANGTTVAAASSIETDVRGLDGDKKARSVRVGQLIAERAKAADIDTVVFDRGGYTYGGRIAALADAARENGLKF.

It belongs to the universal ribosomal protein uL18 family. In terms of assembly, part of the 50S ribosomal subunit; part of the 5S rRNA/L5/L18/L25 subcomplex. Contacts the 5S and 23S rRNAs.

In terms of biological role, this is one of the proteins that bind and probably mediate the attachment of the 5S RNA into the large ribosomal subunit, where it forms part of the central protuberance. In Mycobacterium ulcerans (strain Agy99), this protein is Large ribosomal subunit protein uL18.